A 151-amino-acid chain; its full sequence is Putative pre-16S rRNA nuclease (151 aa).

It belongs to the YqgF nuclease family.

It is found in the cytoplasm. Its function is as follows. Could be a nuclease involved in processing of the 5'-end of pre-16S rRNA. This is Putative pre-16S rRNA nuclease from Bifidobacterium longum subsp. infantis (strain ATCC 15697 / DSM 20088 / JCM 1222 / NCTC 11817 / S12).